Here is a 217-residue protein sequence, read N- to C-terminus: Urease accessory protein UreF (217 aa).

It belongs to the UreF family. In terms of assembly, ureD, UreF and UreG form a complex that acts as a GTP-hydrolysis-dependent molecular chaperone, activating the urease apoprotein by helping to assemble the nickel containing metallocenter of UreC. The UreE protein probably delivers the nickel.

It localises to the cytoplasm. Functionally, required for maturation of urease via the functional incorporation of the urease nickel metallocenter. This is Urease accessory protein UreF from Ruegeria pomeroyi (strain ATCC 700808 / DSM 15171 / DSS-3) (Silicibacter pomeroyi).